Here is a 180-residue protein sequence, read N- to C-terminus: O-acetyl-ADP-ribose deacetylase (180 aa).

The 175-residue stretch at 1-175 (MKPQIEVVVG…LYQRLLIQRG (175 aa)) folds into the Macro domain. Substrate-binding positions include 11–12 (DI), Asn25, 33–35 (GVD), and 122–126 (STGVY). Residue Asp35 is the Proton acceptor of the active site.

Belongs to the MacroD-type family. YmdB subfamily. In terms of assembly, homodimer. Interacts with RNase III.

The catalysed reaction is 3''-O-acetyl-ADP-D-ribose + H2O = ADP-D-ribose + acetate + H(+). The enzyme catalyses 2''-O-acetyl-ADP-D-ribose + H2O = ADP-D-ribose + acetate + H(+). Deacetylates O-acetyl-ADP ribose to yield ADP-ribose and free acetate. Down-regulates ribonuclease 3 (RNase III) activity. Acts by interacting directly with the region of the ribonuclease that is required for dimerization/activation. The sequence is that of O-acetyl-ADP-ribose deacetylase from Enterobacter sp. (strain 638).